A 298-amino-acid polypeptide reads, in one-letter code: Lipoyl synthase (298 aa).

The [4Fe-4S] cluster site is built by Cys40, Cys45, Cys51, Cys67, Cys71, Cys74, and Ser280. One can recognise a Radical SAM core domain in the interval 53-269 (AVRRTATFMI…KEIAMQKGFS (217 aa)).

This sequence belongs to the radical SAM superfamily. Lipoyl synthase family. [4Fe-4S] cluster serves as cofactor.

It localises to the cytoplasm. The enzyme catalyses [[Fe-S] cluster scaffold protein carrying a second [4Fe-4S](2+) cluster] + N(6)-octanoyl-L-lysyl-[protein] + 2 oxidized [2Fe-2S]-[ferredoxin] + 2 S-adenosyl-L-methionine + 4 H(+) = [[Fe-S] cluster scaffold protein] + N(6)-[(R)-dihydrolipoyl]-L-lysyl-[protein] + 4 Fe(3+) + 2 hydrogen sulfide + 2 5'-deoxyadenosine + 2 L-methionine + 2 reduced [2Fe-2S]-[ferredoxin]. The protein operates within protein modification; protein lipoylation via endogenous pathway; protein N(6)-(lipoyl)lysine from octanoyl-[acyl-carrier-protein]. Functionally, catalyzes the radical-mediated insertion of two sulfur atoms into the C-6 and C-8 positions of the octanoyl moiety bound to the lipoyl domains of lipoate-dependent enzymes, thereby converting the octanoylated domains into lipoylated derivatives. The polypeptide is Lipoyl synthase (Bacillus velezensis (strain DSM 23117 / BGSC 10A6 / LMG 26770 / FZB42) (Bacillus amyloliquefaciens subsp. plantarum)).